Consider the following 2090-residue polypeptide: Nuclear pore complex protein Nup205 (2090 aa).

Belongs to the NUP186/NUP192/NUP205 family. Part of the nuclear pore complex (NPC).

The protein localises to the nucleus. It localises to the nuclear pore complex. Plays a role in the nuclear pore complex (NPC) assembly and maintenance, but with limited role in NPC permeability. Required for specific nuclear import pathways such as Mad import. This chain is Nuclear pore complex protein Nup205, found in Drosophila melanogaster (Fruit fly).